Consider the following 546-residue polypeptide: Chaperonin GroEL 2 (546 aa).

Residues 30 to 33 (TLGP), lysine 51, 87 to 91 (DGTTT), glycine 415, 479 to 481 (NAA), and aspartate 495 contribute to the ATP site. Positions 524 to 546 (APKDAPPAAPAGVPGAGGPGFDF) are disordered. Gly residues predominate over residues 537-546 (PGAGGPGFDF).

The protein belongs to the chaperonin (HSP60) family. Forms a cylinder of 14 subunits composed of two heptameric rings stacked back-to-back. Interacts with the co-chaperonin GroES.

It localises to the cytoplasm. It catalyses the reaction ATP + H2O + a folded polypeptide = ADP + phosphate + an unfolded polypeptide.. Functionally, together with its co-chaperonin GroES, plays an essential role in assisting protein folding. The GroEL-GroES system forms a nano-cage that allows encapsulation of the non-native substrate proteins and provides a physical environment optimized to promote and accelerate protein folding. The polypeptide is Chaperonin GroEL 2 (Burkholderia pseudomallei (strain 1710b)).